The primary structure comprises 171 residues: Large ribosomal subunit protein uL10 (171 aa).

Belongs to the universal ribosomal protein uL10 family. As to quaternary structure, part of the ribosomal stalk of the 50S ribosomal subunit. The N-terminus interacts with L11 and the large rRNA to form the base of the stalk. The C-terminus forms an elongated spine to which L12 dimers bind in a sequential fashion forming a multimeric L10(L12)X complex.

Its function is as follows. Forms part of the ribosomal stalk, playing a central role in the interaction of the ribosome with GTP-bound translation factors. The polypeptide is Large ribosomal subunit protein uL10 (Paramagnetospirillum magneticum (strain ATCC 700264 / AMB-1) (Magnetospirillum magneticum)).